The primary structure comprises 101 residues: UPF0235 protein Maeo_0841 (101 aa).

Belongs to the UPF0235 family.

The chain is UPF0235 protein Maeo_0841 from Methanococcus aeolicus (strain ATCC BAA-1280 / DSM 17508 / OCM 812 / Nankai-3).